Consider the following 160-residue polypeptide: Cyclic pyranopterin monophosphate synthase (160 aa).

Substrate contacts are provided by residues 75 to 77 and 113 to 114; these read LCH and ME. D128 is a catalytic residue.

Belongs to the MoaC family. Homohexamer; trimer of dimers.

It catalyses the reaction (8S)-3',8-cyclo-7,8-dihydroguanosine 5'-triphosphate = cyclic pyranopterin phosphate + diphosphate. It participates in cofactor biosynthesis; molybdopterin biosynthesis. Catalyzes the conversion of (8S)-3',8-cyclo-7,8-dihydroguanosine 5'-triphosphate to cyclic pyranopterin monophosphate (cPMP). The protein is Cyclic pyranopterin monophosphate synthase of Methylobacterium nodulans (strain LMG 21967 / CNCM I-2342 / ORS 2060).